The primary structure comprises 193 residues: uncharacterized protein (193 aa).

This is an uncharacterized protein from Mycoplasma pneumoniae (strain ATCC 29342 / M129 / Subtype 1) (Mycoplasmoides pneumoniae).